Consider the following 185-residue polypeptide: Crossover junction endodeoxyribonuclease RuvC (185 aa).

Catalysis depends on residues aspartate 7, glutamate 66, and aspartate 137. Mg(2+) is bound by residues aspartate 7, glutamate 66, and aspartate 137.

It belongs to the RuvC family. Homodimer which binds Holliday junction (HJ) DNA. The HJ becomes 2-fold symmetrical on binding to RuvC with unstacked arms; it has a different conformation from HJ DNA in complex with RuvA. In the full resolvosome a probable DNA-RuvA(4)-RuvB(12)-RuvC(2) complex forms which resolves the HJ. Requires Mg(2+) as cofactor.

Its subcellular location is the cytoplasm. It carries out the reaction Endonucleolytic cleavage at a junction such as a reciprocal single-stranded crossover between two homologous DNA duplexes (Holliday junction).. The RuvA-RuvB-RuvC complex processes Holliday junction (HJ) DNA during genetic recombination and DNA repair. Endonuclease that resolves HJ intermediates. Cleaves cruciform DNA by making single-stranded nicks across the HJ at symmetrical positions within the homologous arms, yielding a 5'-phosphate and a 3'-hydroxyl group; requires a central core of homology in the junction. The consensus cleavage sequence is 5'-(A/T)TT(C/G)-3'. Cleavage occurs on the 3'-side of the TT dinucleotide at the point of strand exchange. HJ branch migration catalyzed by RuvA-RuvB allows RuvC to scan DNA until it finds its consensus sequence, where it cleaves and resolves the cruciform DNA. The polypeptide is Crossover junction endodeoxyribonuclease RuvC (Anaeromyxobacter dehalogenans (strain 2CP-C)).